A 171-amino-acid polypeptide reads, in one-letter code: Ribulose bisphosphate carboxylase small subunit, chloroplastic (171 aa).

A chloroplast-targeting transit peptide spans 1–50 (MATGAGAGAATVVSAFTGLKSTAQFPSSFKMSNAAAEWEQKTTSNGGRVR).

The protein belongs to the RuBisCO small chain family. Heterohexadecamer of 8 large and 8 small subunits.

Its subcellular location is the plastid. The protein resides in the chloroplast. In terms of biological role, ruBisCO catalyzes two reactions: the carboxylation of D-ribulose 1,5-bisphosphate, the primary event in carbon dioxide fixation, as well as the oxidative fragmentation of the pentose substrate. Both reactions occur simultaneously and in competition at the same active site. Although the small subunit is not catalytic it is essential for maximal activity. The protein is Ribulose bisphosphate carboxylase small subunit, chloroplastic of Pinus thunbergii (Japanese black pine).